Reading from the N-terminus, the 196-residue chain is Guanylate kinase (196 aa).

The Guanylate kinase-like domain occupies 7-191 (RNIVLLVGPS…AAEEIEKIIL (185 aa)). 14–21 (GPSGVGKG) is an ATP binding site.

The protein belongs to the guanylate kinase family.

The protein resides in the cytoplasm. The enzyme catalyses GMP + ATP = GDP + ADP. Its function is as follows. Essential for recycling GMP and indirectly, cGMP. This chain is Guanylate kinase, found in Mycoplasmopsis pulmonis (strain UAB CTIP) (Mycoplasma pulmonis).